The chain runs to 186 residues: MAVARARVLGVQWLQRASRNVMPLGARTASHMTKDMFPGPYPRTPEERAAAAKKYNMRVEDYEPYPDDGMGYGDYPKLPDRSQHERDPWYSWDQPGLRLNWGEPMHWHLDMYNRNRVDTSPTPISWHVMCMQLFGFLAFMIFMCWVGDVYPVYQPVGPKQYPYNNLYLERGGDPSKEPERVVHYEI.

A mitochondrion-targeting transit peptide spans 1-28 (MAVARARVLGVQWLQRASRNVMPLGART). The helical transmembrane segment at 133-153 (LFGFLAFMIFMCWVGDVYPVY) threads the bilayer.

It belongs to the complex I NDUFB8 subunit family. In terms of assembly, complex I is composed of 45 different subunits.

The protein localises to the mitochondrion inner membrane. Accessory subunit of the mitochondrial membrane respiratory chain NADH dehydrogenase (Complex I), that is believed not to be involved in catalysis. Complex I functions in the transfer of electrons from NADH to the respiratory chain. The immediate electron acceptor for the enzyme is believed to be ubiquinone. The polypeptide is NADH dehydrogenase [ubiquinone] 1 beta subcomplex subunit 8, mitochondrial (NDUFB8) (Gorilla gorilla gorilla (Western lowland gorilla)).